The primary structure comprises 227 residues: Eukaryotic translation initiation factor 4E-1 (227 aa).

Residues Met-1 to His-52 are disordered. Residues Pro-9–Arg-20 are compositionally biased toward low complexity. Residues Asp-25–Asp-37 show a composition bias toward acidic residues. EIF4G-binding stretches follow at residues His-52–Glu-55 and Phe-62–His-98. MRNA-binding positions include Lys-70 to Gly-75, Lys-102, and Trp-120 to Glu-121. Cys-125 and Cys-163 are joined by a disulfide. Positions His-146 to Gln-155 are EIF4G-binding. MRNA contacts are provided by residues Arg-170–Arg-175 and Lys-215–Lys-219.

Belongs to the eukaryotic initiation factor 4E family. In terms of assembly, EIF4F is a multi-subunit complex, the composition of which varies with external and internal environmental conditions. It is composed of at least EIF4A, EIF4E and EIF4G. EIF4E is also known to interact with other partners. In higher plants two isoforms of EIF4F have been identified, named isoform EIF4F and isoform EIF(iso)4F. Isoform EIF4F has subunits p220 and p26, whereas isoform EIF(iso)4F has subunits p82 and p28. Post-translationally, according to the redox status, the Cys-125-Cys-163 disulfide bridge may have a role in regulating protein function by affecting its ability to bind capped mRNA.

Its subcellular location is the nucleus. The protein localises to the cytoplasm. Component of the protein complex eIF4F, which is involved in the recognition of the mRNA cap, ATP-dependent unwinding of 5'-terminal secondary structure and recruitment of mRNA to the ribosome. Recognizes and binds the 7-methylguanosine-containing mRNA cap during an early step in the initiation of protein synthesis and facilitates ribosome binding by inducing the unwinding of the mRNAs secondary structures. This chain is Eukaryotic translation initiation factor 4E-1, found in Oryza sativa subsp. japonica (Rice).